A 246-amino-acid chain; its full sequence is MSGHSKWHNIQAKKSKVDAKRGKIFTKIGKEIAIAAKNGGPNPDANPKLRDVIAKAKANNMPKDSIERAIKKAAGELAGVNYEEILYEGYGPDGIAVLVQALTDNKNRSAGNVRHAFSKHGGNLGSTGCVSFMFQTKGQIVIEKNDELDEEELMMMALECGAEDFQSEDEVYIITTSPEDFGSVRETLEEKGLEFLEAEVKSIPDTYTVIDENTAGKFQKMLDVLEDDEDVQDVYHNAEFPEGWEE.

The protein belongs to the TACO1 family.

It is found in the cytoplasm. The polypeptide is Probable transcriptional regulatory protein ORF2U (Hathewaya histolytica (Clostridium histolyticum)).